The primary structure comprises 277 residues: 4-hydroxybenzoate octaprenyltransferase (277 aa).

The next 8 helical transmembrane spans lie at Phe24–Ile44, Val81–Leu101, Asn102–Met122, Pro129–Ile149, Leu152–Thr172, Ile201–Glu221, Ile224–Thr244, and Ala255–Tyr275.

It belongs to the UbiA prenyltransferase family. Mg(2+) serves as cofactor.

It is found in the cell inner membrane. It catalyses the reaction all-trans-octaprenyl diphosphate + 4-hydroxybenzoate = 4-hydroxy-3-(all-trans-octaprenyl)benzoate + diphosphate. It functions in the pathway cofactor biosynthesis; ubiquinone biosynthesis. Catalyzes the prenylation of para-hydroxybenzoate (PHB) with an all-trans polyprenyl group. Mediates the second step in the final reaction sequence of ubiquinone-8 (UQ-8) biosynthesis, which is the condensation of the polyisoprenoid side chain with PHB, generating the first membrane-bound Q intermediate 3-octaprenyl-4-hydroxybenzoate. The chain is 4-hydroxybenzoate octaprenyltransferase from Haemophilus ducreyi (strain 35000HP / ATCC 700724).